The primary structure comprises 299 residues: tRNA dimethylallyltransferase (299 aa).

G10–T17 serves as a coordination point for ATP. Position 12–17 (T12–T17) interacts with substrate. Residues D35 to Q38 are interaction with substrate tRNA.

The protein belongs to the IPP transferase family. In terms of assembly, monomer. It depends on Mg(2+) as a cofactor.

It catalyses the reaction adenosine(37) in tRNA + dimethylallyl diphosphate = N(6)-dimethylallyladenosine(37) in tRNA + diphosphate. Catalyzes the transfer of a dimethylallyl group onto the adenine at position 37 in tRNAs that read codons beginning with uridine, leading to the formation of N6-(dimethylallyl)adenosine (i(6)A). The chain is tRNA dimethylallyltransferase from Streptococcus thermophilus (strain ATCC BAA-250 / LMG 18311).